The primary structure comprises 75 residues: Small, acid-soluble spore protein Tlp (75 aa).

Belongs to the Tlp family.

It localises to the spore core. The polypeptide is Small, acid-soluble spore protein Tlp (Geobacillus kaustophilus (strain HTA426)).